The sequence spans 263 residues: Type II restriction enzyme TaqI (263 aa).

In terms of processing, only 15% of purified enzyme (upon expression in E.coli) can be sequenced, suggesting the remainder has a blocked N-terminus.

It catalyses the reaction Endonucleolytic cleavage of DNA to give specific double-stranded fragments with terminal 5'-phosphates.. A P subtype restriction enzyme that recognizes the double-stranded sequence 5'-TCGA-3' and cleaves after T-1. In Thermus aquaticus, this protein is Type II restriction enzyme TaqI (taqIR).